A 359-amino-acid polypeptide reads, in one-letter code: 3-dehydroquinate synthase (359 aa).

NAD(+)-binding positions include Ser69–Lys74, Gly103–Asp107, Thr127–Thr128, Lys139, Lys148, and Thr166–Thr169. Glu181, His242, and His259 together coordinate Zn(2+).

It belongs to the sugar phosphate cyclases superfamily. Dehydroquinate synthase family. It depends on NAD(+) as a cofactor. Requires Co(2+) as cofactor. The cofactor is Zn(2+).

The protein localises to the cytoplasm. The catalysed reaction is 7-phospho-2-dehydro-3-deoxy-D-arabino-heptonate = 3-dehydroquinate + phosphate. The protein operates within metabolic intermediate biosynthesis; chorismate biosynthesis; chorismate from D-erythrose 4-phosphate and phosphoenolpyruvate: step 2/7. Functionally, catalyzes the conversion of 3-deoxy-D-arabino-heptulosonate 7-phosphate (DAHP) to dehydroquinate (DHQ). This chain is 3-dehydroquinate synthase, found in Oceanobacillus iheyensis (strain DSM 14371 / CIP 107618 / JCM 11309 / KCTC 3954 / HTE831).